The primary structure comprises 192 residues: Thymidine kinase (192 aa).

Residues 9–16 (SAMNAGKS) and 87–90 (DECQ) contribute to the ATP site. E88 functions as the Proton acceptor in the catalytic mechanism. Zn(2+)-binding residues include C145, C147, C182, and H185.

It belongs to the thymidine kinase family. As to quaternary structure, homotetramer.

The protein resides in the cytoplasm. It carries out the reaction thymidine + ATP = dTMP + ADP + H(+). The chain is Thymidine kinase from Vibrio cholerae serotype O1 (strain ATCC 39315 / El Tor Inaba N16961).